The chain runs to 181 residues: UPF0340 protein OB2986 (181 aa).

This sequence belongs to the UPF0340 family.

The protein is UPF0340 protein OB2986 of Oceanobacillus iheyensis (strain DSM 14371 / CIP 107618 / JCM 11309 / KCTC 3954 / HTE831).